A 338-amino-acid chain; its full sequence is N-acetyl-gamma-glutamyl-phosphate reductase (338 aa).

Residue cysteine 148 is part of the active site.

It belongs to the NAGSA dehydrogenase family. Type 1 subfamily.

It localises to the cytoplasm. The enzyme catalyses N-acetyl-L-glutamate 5-semialdehyde + phosphate + NADP(+) = N-acetyl-L-glutamyl 5-phosphate + NADPH + H(+). Its pathway is amino-acid biosynthesis; L-arginine biosynthesis; N(2)-acetyl-L-ornithine from L-glutamate: step 3/4. Catalyzes the NADPH-dependent reduction of N-acetyl-5-glutamyl phosphate to yield N-acetyl-L-glutamate 5-semialdehyde. This chain is N-acetyl-gamma-glutamyl-phosphate reductase, found in Leptospira interrogans serogroup Icterohaemorrhagiae serovar Lai (strain 56601).